A 791-amino-acid chain; its full sequence is IQ motif and ubiquitin-like domain-containing protein (791 aa).

Residues 1–73 (MSNQQEKYEA…SDQSFSSLEP (73 aa)) are disordered. The region spanning 131-207 (ATVKVVLIPV…VQVEIFSTNP (77 aa)) is the Ubiquitin-like domain. Residues 338 to 367 (RLKAVIVIQTYYRQWHAKIFVENLRRQKSL) form the IQ domain.

As to quaternary structure, component of the axonemal radial spoke 1 (RS1) complex, at least composed of spoke head proteins RSPH1, RSPH3, RSPH9 and the cilia-specific component RSPH4A or sperm-specific component RSPH6A, spoke stalk proteins RSPH14, DNAJB13, DYDC1, ROPN1L and NME5, and the anchor protein IQUB. Does not appear to be part of radial spoke complexes 2 or 3 (RS2 or RS3). Interacts with CALM1. Interacts with DNAJB13. Interacts with DYNLL2. Interacts with NME5. Interacts with RSPH3. Interacts with RSPH9. Interacts with ZMYND10. Interacts with calmodulin; the interaction occurs in conditions of low but not high calcium.

The protein resides in the cytoplasm. Its subcellular location is the cytoskeleton. It is found in the flagellum axoneme. The protein localises to the cell projection. It localises to the cilium. Functionally, adapter protein that anchors the radial spoke 1 (RS1) complex to the A microtubule of outer doublet microtubules in axonemes. The triple radial spokes (RS1, RS2 and RS3) are required to modulate beating of the sperm flagellum. May play a role in inhibiting signaling via MAPK1/ERK2 and MAPK3/ERK1. Additionally, may play a role in the functioning of cilia. Not required for the functioning of tracheal or ependymal cilia. In Homo sapiens (Human), this protein is IQ motif and ubiquitin-like domain-containing protein (IQUB).